The following is an 85-amino-acid chain: Translational regulator CsrA (85 aa).

The protein belongs to the CsrA/RsmA family. As to quaternary structure, homodimer; the beta-strands of each monomer intercalate to form a hydrophobic core, while the alpha-helices form wings that extend away from the core.

The protein localises to the cytoplasm. A translational regulator that binds mRNA to regulate translation initiation and/or mRNA stability. Usually binds in the 5'-UTR at or near the Shine-Dalgarno sequence preventing ribosome-binding, thus repressing translation. Its main target seems to be the major flagellin gene, while its function is anatagonized by FliW. In Leifsonia xyli subsp. xyli (strain CTCB07), this protein is Translational regulator CsrA.